Consider the following 496-residue polypeptide: Costunolide synthase (496 aa).

A helical; Signal-anchor for type II membrane protein membrane pass occupies residues 4 to 24 (FTIFSLVVASLVFFACWALVA). N-linked (GlcNAc...) asparagine glycosylation is found at Asn26, Asn168, Asn280, and Asn412. Cys434 serves as a coordination point for heme.

The protein belongs to the cytochrome P450 family. Requires heme as cofactor. In terms of tissue distribution, expressed in floral glandular trichomes.

It is found in the membrane. The catalysed reaction is germacra-1(10),4,11(13)-trien-12-oate + reduced [NADPH--hemoprotein reductase] + O2 = (+)-costunolide + oxidized [NADPH--hemoprotein reductase] + 2 H2O. Its pathway is secondary metabolite biosynthesis; terpenoid biosynthesis. Involved in the biosynthesis of germacrene-derived sesquiterpene lactones. Component of the parthenolide biosynthetic pathway; parthenolide and conjugates are promising anti-cancer drugs highly active against colon cancer cells. Hydroxylates germacrene A acid to 6-alpha-hydroxy-germacrene A acid, a precursor of sesquiterpene lactones that spontaneously undergoes a lactonization which yields costunolide. The polypeptide is Costunolide synthase (Tanacetum parthenium (Feverfew)).